A 661-amino-acid chain; its full sequence is Transcription factor ccg-8 (661 aa).

Basic residues predominate over residues M1–H11. Disordered stretches follow at residues M1–N69, S107–P243, L255–Q279, and R354–S398. Composition is skewed to low complexity over residues H23–Q43 and S107–R140. Residues D173–S187 are compositionally biased toward polar residues. The segment covering Q192–F203 has biased composition (pro residues). Residues S357–Q366 show a composition bias toward basic and acidic residues.

In terms of biological role, transcription factor that plays a pivotal role in azole adaptive responses by regulating the drug accumulation in the cells. Affects the transcriptional responses to ketoconazole of many genes, including the target gene (erg11), an azole transporter gene (cdr4), a hexose transporter gene (hxt13), a stress response gene (kts-1), two transcription factor genes (named kts-2 and fsd-1/ndt80). Also regulates phospholipid synthesis that is not involved in azole resistance. The chain is Transcription factor ccg-8 from Neurospora crassa (strain ATCC 24698 / 74-OR23-1A / CBS 708.71 / DSM 1257 / FGSC 987).